We begin with the raw amino-acid sequence, 335 residues long: tRNA N6-adenosine threonylcarbamoyltransferase (335 aa).

Residues H110 and H114 each coordinate Fe cation. Substrate-binding positions include 132 to 136 (LVSGG), D165, G178, and N271. Position 299 (D299) interacts with Fe cation.

The protein belongs to the KAE1 / TsaD family. Fe(2+) is required as a cofactor.

The protein resides in the cytoplasm. It catalyses the reaction L-threonylcarbamoyladenylate + adenosine(37) in tRNA = N(6)-L-threonylcarbamoyladenosine(37) in tRNA + AMP + H(+). In terms of biological role, required for the formation of a threonylcarbamoyl group on adenosine at position 37 (t(6)A37) in tRNAs that read codons beginning with adenine. Is involved in the transfer of the threonylcarbamoyl moiety of threonylcarbamoyl-AMP (TC-AMP) to the N6 group of A37, together with TsaE and TsaB. TsaD likely plays a direct catalytic role in this reaction. The protein is tRNA N6-adenosine threonylcarbamoyltransferase of Campylobacter jejuni subsp. doylei (strain ATCC BAA-1458 / RM4099 / 269.97).